Reading from the N-terminus, the 337-residue chain is Pyridoxal 5'-phosphate synthase subunit PdxS (337 aa).

A D-ribose 5-phosphate-binding site is contributed by Asp63. Lys120 acts as the Schiff-base intermediate with D-ribose 5-phosphate in catalysis. Gly192 lines the D-ribose 5-phosphate pocket. Lys204 lines the D-glyceraldehyde 3-phosphate pocket. D-ribose 5-phosphate-binding positions include Gly253 and 274–275 (GS).

Belongs to the PdxS/SNZ family. As to quaternary structure, in the presence of PdxT, forms a dodecamer of heterodimers.

It carries out the reaction aldehydo-D-ribose 5-phosphate + D-glyceraldehyde 3-phosphate + L-glutamine = pyridoxal 5'-phosphate + L-glutamate + phosphate + 3 H2O + H(+). It participates in cofactor biosynthesis; pyridoxal 5'-phosphate biosynthesis. Functionally, catalyzes the formation of pyridoxal 5'-phosphate from ribose 5-phosphate (RBP), glyceraldehyde 3-phosphate (G3P) and ammonia. The ammonia is provided by the PdxT subunit. Can also use ribulose 5-phosphate and dihydroxyacetone phosphate as substrates, resulting from enzyme-catalyzed isomerization of RBP and G3P, respectively. The chain is Pyridoxal 5'-phosphate synthase subunit PdxS from Aeropyrum pernix (strain ATCC 700893 / DSM 11879 / JCM 9820 / NBRC 100138 / K1).